An 875-amino-acid polypeptide reads, in one-letter code: Neurotrypsin (875 aa).

Positions 1–20 (MTLARFVLALMLGALPEVVG) are cleaved as a signal peptide. An N-linked (GlcNAc...) asparagine glycan is attached at N26. The interval 29–88 (LHHSHRHSPPAGPHYPYYLPTQQRPPRTRPPPPLPRFPRPPRALPAQRPHALQAGHTPRP) is disordered. Residues 56-71 (TRPPPPLPRFPRPPRA) are compositionally biased toward pro residues. The 73-residue stretch at 93–165 (CPAGEPWVSV…GKVDWGYCDC (73 aa)) folds into the Kringle domain. Intrachain disulfides connect C93/C165, C109/C149, C138/C163, C195/C259, C208/C269, C239/C249, C305/C369, C318/C379, C349/C359, C412/C475, C425/C485, C455/C465, C525/C589, C538/C599, C569/C579, C619/C750, C661/C677, C765/C831, C794/C808, and C821/C850. SRCR domains lie at 170–271 (VRLR…TCSF), 280–381 (IRLA…SCTP), 387–487 (IRLA…ACYP), and 500–601 (VRLM…ICDY). The segment at 619–630 (CGLRLLHRRQKR) is zymogen activation region. One can recognise a Peptidase S1 domain in the interval 631–874 (IIGGKNSLRG…FVPWIKSVTK (244 aa)). H676 (charge relay system) is an active-site residue. N683 carries N-linked (GlcNAc...) asparagine glycosylation. The Charge relay system role is filled by D726. S825 functions as the Charge relay system in the catalytic mechanism.

This sequence belongs to the peptidase S1 family. Brain and Leydig cells of the testis.

The protein resides in the secreted. Plays a role in neuronal plasticity and the proteolytic action may subserve structural reorganizations associated with learning and memory operations. The sequence is that of Neurotrypsin (PRSS12) from Homo sapiens (Human).